Consider the following 504-residue polypeptide: Doublesex- and mab-3-related transcription factor A1 (504 aa).

The span at 1–13 (MERSQCGSRDRGV) shows a compositional bias: basic and acidic residues. The interval 1–27 (MERSQCGSRDRGVSGRPHLAPGLVVAA) is disordered. A DNA-binding region (DM) is located at residues 97–144 (CARCRNHGVVSALKGHKRFCRWRDCACAKCTLIAERQRVMAAQVALRR). 2 disordered regions span residues 170–192 (GRAS…AAGA) and 266–307 (SISE…NESE). Over residues 293 to 306 (RSLSSSDLESGNES) the composition is skewed to low complexity. In terms of domain architecture, DMA spans 327-362 (RDPLDILTKIFPNYRRSRLEGILRFCKGDVVQAIEQ).

The protein belongs to the DMRT family. Expressed in liver, kidney, pancreas, prostate and weakly detected in testis and ovary.

The protein localises to the nucleus. This is Doublesex- and mab-3-related transcription factor A1 (DMRTA1) from Homo sapiens (Human).